Consider the following 593-residue polypeptide: Metal-response element-binding transcription factor 2 (593 aa).

The segment at 1 to 24 (MRDSTGAGNSLVHKRSPLRRNQKT) is disordered. The span at 12-22 (VHKRSPLRRNQ) shows a compositional bias: basic residues. At threonine 24 the chain carries Phosphothreonine. The Tudor domain maps to 44 to 101 (CKFEEGQDVLARWSDGLFYLGTIKKINILKQSCFIIFEDSSKSWVLWKDIQTGATGSG). 2 PHD-type zinc fingers span residues 102-157 (EMVC…CVFA) and 201-255 (QCYC…CSSG). Disordered stretches follow at residues 357-410 (VAFK…GPYT) and 444-486 (GIAH…TRTG). Lysine 360 is covalently cross-linked (Glycyl lysine isopeptide (Lys-Gly) (interchain with G-Cter in SUMO2)). Over residues 360 to 374 (KAEKEPEGTSHEFKI) the composition is skewed to basic and acidic residues. Polar residues predominate over residues 447-470 (HSSNTSDVDLTGASSANETTSASI). Serine 452 carries the phosphoserine modification. Lysine 522 participates in a covalent cross-link: Glycyl lysine isopeptide (Lys-Gly) (interchain with G-Cter in SUMO2).

The protein belongs to the Polycomblike family. Associates with the PRC2 complex, which consists of the core components EED, EZH1 or EZH2, SUZ12, and RBBP4, and various combinations of accessory subunits including AEBP2, JARID2, PHF19, MTF2 and EPOP. Forms a dimeric PRC2.1 (class 1, PRC-PCL) complex consisting of at least SUZ12, RBBP4, and PHF19 or MTF2; PHF19 and MTF2 stabilize the dimeric structure which enhances PRC2 interaction with chromatin.

It localises to the nucleus. Its function is as follows. Polycomb group (PcG) protein that specifically binds histone H3 trimethylated at 'Lys-36' (H3K36me3) and recruits the PRC2 complex, thus enhancing PRC2 H3K27me3 methylation activity. Regulates the transcriptional networks during embryonic stem cell self-renewal and differentiation. Promotes recruitment of the PRC2 complex to the inactive X chromosome in differentiating XX ES cells and PRC2 recruitment to target genes in undifferentiated ES cells. Required to repress Hox genes by enhancing H3K27me3 methylation of the PRC2 complex. In some conditions may act as an inhibitor of PRC2 activity: able to activate the CDKN2A gene and promote cellular senescence by suppressing the catalytic activity of the PRC2 complex locally. Binds to the metal-regulating-element (MRE) of MT1A gene promoter. The polypeptide is Metal-response element-binding transcription factor 2 (Mtf2) (Mus musculus (Mouse)).